We begin with the raw amino-acid sequence, 244 residues long: Chlorosome protein I (244 aa).

In terms of domain architecture, 2Fe-2S ferredoxin-type spans 1-95 (MNLIINDKTA…TVKVLSRPEE (95 aa)). [2Fe-2S] cluster is bound by residues Cys-33, Cys-39, Cys-42, and Cys-77.

It depends on [2Fe-2S] cluster as a cofactor.

The protein localises to the chlorosome. Its function is as follows. Could play a direct role in the oxidation or reduction of the quenching species formed in the chlorosome. The sequence is that of Chlorosome protein I (csmI) from Chlorobaculum tepidum (strain ATCC 49652 / DSM 12025 / NBRC 103806 / TLS) (Chlorobium tepidum).